Reading from the N-terminus, the 256-residue chain is 3-isopropylmalate dehydratase small subunit 2 (256 aa).

A chloroplast-targeting transit peptide spans 1–59 (MAYSLPTFPQALPCSSTKTSSSLATFRSPFLRFNGSTSLIPSSISITSRGTSSPTIIPR).

Belongs to the LeuD family. As to quaternary structure, heterodimer of the large LEUC/IIL1 subunit and the small LEUD (SSU1, SSU2 or SSU3) subunits. As to expression, expressed in vascular bundles of roots, cotyledons and rosette leaves. Expressed in stem vascular bundles which branche off into lateral inflorescences. Expressed in connective tissues in anthers. In young seedlings, expressed in cotyledon epidermal cells and vasculare bundles. In hypocotyls, expressed in parenchyma cells surrounding the vasculature and further peripheral cells. In seedling roots, expressed in cells along the vasculature. In roots of adult plants, expressed in cells closely associated with the stele. In flowering stalks, expressed in parenchyma cells associated with the phloem or the xylem. Expressed in the vasculature of sepals and petals.

It localises to the plastid. The protein localises to the chloroplast stroma. It catalyses the reaction (2R,3S)-3-isopropylmalate = (2S)-2-isopropylmalate. It carries out the reaction a 2-(omega-methylsulfanyl)alkylmalate = a 2-(omega-methylsulfanyl)alkylmaleate + H2O. The catalysed reaction is 2-(3-methylsulfanyl)propylmalate = 2-(2-methylsulfanyl)propylmaleate + H2O. The enzyme catalyses a 3-(omega-methylsulfanyl)alkylmalate = a 2-(omega-methylsulfanyl)alkylmaleate + H2O. It catalyses the reaction 2-(2-methylsulfanyl)ethylmalate = 2-(2-methylsulfanyl)ethylmaleate + H2O. It carries out the reaction 3-(2-methylsulfanyl)ethylmalate = 2-(2-methylsulfanyl)ethylmaleate + H2O. The catalysed reaction is 3-(3-methylsulfanyl)propylmalate = 2-(2-methylsulfanyl)propylmaleate + H2O. It participates in amino-acid biosynthesis; L-leucine biosynthesis; L-leucine from 3-methyl-2-oxobutanoate: step 2/4. Catalyzes the isomerization between 2-isopropylmalate and 3-isopropylmalate, via the formation of 2-isopropylmaleate. Functions redundantly with LEUD2 in the methionine chain elongation pathway of aliphatic glucosinolate formation. The chain is 3-isopropylmalate dehydratase small subunit 2 from Arabidopsis thaliana (Mouse-ear cress).